Here is a 31-residue protein sequence, read N- to C-terminus: Cytochrome b6-f complex subunit 6 (31 aa).

The helical transmembrane segment at 4-24 (LLSYFAFLMLALTFTLALFVG) threads the bilayer.

This sequence belongs to the PetL family. In terms of assembly, the 4 large subunits of the cytochrome b6-f complex are cytochrome b6, subunit IV (17 kDa polypeptide, PetD), cytochrome f and the Rieske protein, while the 4 small subunits are PetG, PetL, PetM and PetN. The complex functions as a dimer.

It is found in the plastid. It localises to the chloroplast thylakoid membrane. In terms of biological role, component of the cytochrome b6-f complex, which mediates electron transfer between photosystem II (PSII) and photosystem I (PSI), cyclic electron flow around PSI, and state transitions. PetL is important for photoautotrophic growth as well as for electron transfer efficiency and stability of the cytochrome b6-f complex. The chain is Cytochrome b6-f complex subunit 6 from Adiantum capillus-veneris (Maidenhair fern).